A 314-amino-acid chain; its full sequence is Ribonuclease Z (314 aa).

Positions 62, 64, 66, 67, 139, 210, and 268 each coordinate Zn(2+). Catalysis depends on Asp-66, which acts as the Proton acceptor.

Belongs to the RNase Z family. In terms of assembly, homodimer. The cofactor is Zn(2+).

The enzyme catalyses Endonucleolytic cleavage of RNA, removing extra 3' nucleotides from tRNA precursor, generating 3' termini of tRNAs. A 3'-hydroxy group is left at the tRNA terminus and a 5'-phosphoryl group is left at the trailer molecule.. Its function is as follows. Zinc phosphodiesterase, which displays some tRNA 3'-processing endonuclease activity. Probably involved in tRNA maturation, by removing a 3'-trailer from precursor tRNA. This is Ribonuclease Z from Acaryochloris marina (strain MBIC 11017).